Reading from the N-terminus, the 313-residue chain is Hsp90 co-chaperone Cdc37-like 1 (313 aa).

The protein belongs to the CDC37 family. As to quaternary structure, forms complexes with Hsp70 and Hsp90.

The protein resides in the cytoplasm. Functionally, co-chaperone that binds to numerous proteins and promotes their interaction with Hsp70 and Hsp90. The protein is Hsp90 co-chaperone Cdc37-like 1 (cdc37l1) of Danio rerio (Zebrafish).